Consider the following 825-residue polypeptide: MDVSLCPAKCSFWRIFLLGSVWLDYVGSVLACPANCVCSKTEINCRRPDDGNLFPLLEGQDSGNSNGNASINITDISRNITSIHIENWRGLHTLNAVDMELYTGLQKLTIKNSGLRSIQPRAFAKNPHLRYINLSSNRLTTLSWQLFQTLSLRELRLEQNFFNCSCDIRWMQLWQEQGEAKLNSQSLYCISADGSQLPLFRMNISQCDLPEISVSHVNLTVREGDNAVVTCNGSGSPLPDVDWIVTGLQSINTHQTNLNWTNVHAINLTLVNVTSEDNGFTLTCIAENVVGMSNASVALTVHYPPRVVSLEEPELRLEHCIEFVVRGNPPPTLHWLHNGQPLRESKITHVEYYQEGEVSEGCLLFNKPTHYNNGNYTLNRQEPLGTANQTINGHFLKEPFPESTDNFVSFYEVSPTPPITVTHKPEEDTFGVSIAVGLAAFACVLLVVLFIMINKYGRRSKFGMKGPVAVISGEEDSASPLHHDQPWHHHTLITGRRAGHSVIGMTRIPVIENPQYFRQGHNCHKPDTYVQHIKRRDIVLKRELGEGAFGKVFLAECYNLSPTKVKMLVAVKALKDPTLAARKDFQREAELLTNLQHEHIVKFYGVCGDGDPLIMVFEYMKHGDLNKFLRAHGPDAMILVDGQPRQAKGELGLSQMLHIASQICSGMVYLASQHFVHRDLATRNCLVGANLLVKIGDFGMSRDVYSTDYYRVGGHTMLPIRWMPPESIMYRKFTTESDVWSFGVILWEIFTYGKQPWFQLSNTEVIECITQGRVLERPRVCPKEVYDVMLGCWQREPQQRLNIKEIYKILHALGKATPIYLDILG.

The signal sequence occupies residues 1–31; that stretch reads MDVSLCPAKCSFWRIFLLGSVWLDYVGSVLA. Intrachain disulfides connect C32–C38 and C36–C45. Over 32–429 the chain is Extracellular; sequence CPANCVCSKT…TVTHKPEEDT (398 aa). 3 N-linked (GlcNAc...) asparagine glycosylation sites follow: N68, N72, and N79. 2 LRR repeats span residues 104 to 125 and 128 to 149; these read GLQK…AFAK and HLRY…LFQT. Residues N133 and N163 are each glycosylated (N-linked (GlcNAc...) asparagine). The LRRCT domain maps to 160–209; that stretch reads NFFNCSCDIRWMQLWQEQGEAKLNSQSLYCISADGSQLPLFRMNISQCDL. Cystine bridges form between C164–C189 and C166–C207. N-linked (GlcNAc...) asparagine glycosylation is found at N203, N218, N232, N259, N267, N272, and N294. Ig-like C2-type domains lie at 210-300 and 309-382; these read PEIS…VALT and SLEE…NRQE. An intrachain disulfide couples C231 to C284. The cysteines at positions 320 and 362 are disulfide-linked. Residues N375 and N388 are each glycosylated (N-linked (GlcNAc...) asparagine). Residues 430–453 form a helical membrane-spanning segment; it reads FGVSIAVGLAAFACVLLVVLFIMI. The Cytoplasmic segment spans residues 454–825; the sequence is NKYGRRSKFG…ATPIYLDILG (372 aa). The residue at position 516 (Y516) is a Phosphotyrosine; by autocatalysis. Residues 538-814 form the Protein kinase domain; that stretch reads IVLKRELGEG…EIYKILHALG (277 aa). ATP-binding positions include 544–552 and K572; that span reads LGEGAFGKV. The active-site Proton acceptor is D679. Y705, Y709, Y710, and Y820 each carry phosphotyrosine; by autocatalysis.

Belongs to the protein kinase superfamily. Tyr protein kinase family. Insulin receptor subfamily. In terms of assembly, exists in a dynamic equilibrium between monomeric (low affinity) and dimeric (high affinity) structures. Binds SH2B2. Interacts with SQSTM1 and KIDINS220. Interacts with PTPRS. Interacts with MAPK8IP3/JIP3. Ligand-mediated auto-phosphorylation. Preferentially in the brain, low levels in the ovaries.

The protein localises to the membrane. The enzyme catalyses L-tyrosyl-[protein] + ATP = O-phospho-L-tyrosyl-[protein] + ADP + H(+). Functionally, receptor tyrosine kinase involved in nervous system and probably heart development. Upon binding of its ligand NTF3/neurotrophin-3, NTRK3 autophosphorylates and activates different signaling pathways, including the phosphatidylinositol 3-kinase/AKT and the MAPK pathways, that control cell survival and differentiation. This Sus scrofa (Pig) protein is NT-3 growth factor receptor (NTRK3).